The chain runs to 274 residues: 2,3,4,5-tetrahydropyridine-2,6-dicarboxylate N-succinyltransferase (274 aa).

Belongs to the transferase hexapeptide repeat family.

The protein resides in the cytoplasm. The enzyme catalyses (S)-2,3,4,5-tetrahydrodipicolinate + succinyl-CoA + H2O = (S)-2-succinylamino-6-oxoheptanedioate + CoA. The protein operates within amino-acid biosynthesis; L-lysine biosynthesis via DAP pathway; LL-2,6-diaminopimelate from (S)-tetrahydrodipicolinate (succinylase route): step 1/3. This chain is 2,3,4,5-tetrahydropyridine-2,6-dicarboxylate N-succinyltransferase, found in Salmonella heidelberg (strain SL476).